The following is a 359-amino-acid chain: DNA polymerase IV (359 aa).

A UmuC domain is found at 4 to 184 (IVHVDMDAFY…LKVNRIPGVG (181 aa)). Mg(2+) is bound by residues D8 and D102. E103 is an active-site residue.

This sequence belongs to the DNA polymerase type-Y family. In terms of assembly, monomer. Mg(2+) is required as a cofactor.

It is found in the cytoplasm. It carries out the reaction DNA(n) + a 2'-deoxyribonucleoside 5'-triphosphate = DNA(n+1) + diphosphate. Functionally, poorly processive, error-prone DNA polymerase involved in untargeted mutagenesis. Copies undamaged DNA at stalled replication forks, which arise in vivo from mismatched or misaligned primer ends. These misaligned primers can be extended by PolIV. Exhibits no 3'-5' exonuclease (proofreading) activity. May be involved in translesional synthesis, in conjunction with the beta clamp from PolIII. The protein is DNA polymerase IV of Xanthomonas axonopodis pv. citri (strain 306).